We begin with the raw amino-acid sequence, 374 residues long: Probable dual-specificity RNA methyltransferase RlmN (374 aa).

The span at 1 to 17 (MEKNEISEERRTQEKEK) shows a compositional bias: basic and acidic residues. The interval 1–22 (MEKNEISEERRTQEKEKQHGHR) is disordered. The Proton acceptor role is filled by E119. In terms of domain architecture, Radical SAM core spans 125 to 360 (SEERITACIS…VTVRKSQGAT (236 aa)). C132 and C365 form a disulfide bridge. [4Fe-4S] cluster contacts are provided by C139, C143, and C146. Residues 190–191 (GE), S223, 246–248 (SLH), and N322 each bind S-adenosyl-L-methionine. C365 (S-methylcysteine intermediate) is an active-site residue.

This sequence belongs to the radical SAM superfamily. RlmN family. [4Fe-4S] cluster is required as a cofactor.

The protein resides in the cytoplasm. It carries out the reaction adenosine(2503) in 23S rRNA + 2 reduced [2Fe-2S]-[ferredoxin] + 2 S-adenosyl-L-methionine = 2-methyladenosine(2503) in 23S rRNA + 5'-deoxyadenosine + L-methionine + 2 oxidized [2Fe-2S]-[ferredoxin] + S-adenosyl-L-homocysteine. It catalyses the reaction adenosine(37) in tRNA + 2 reduced [2Fe-2S]-[ferredoxin] + 2 S-adenosyl-L-methionine = 2-methyladenosine(37) in tRNA + 5'-deoxyadenosine + L-methionine + 2 oxidized [2Fe-2S]-[ferredoxin] + S-adenosyl-L-homocysteine. Its function is as follows. Specifically methylates position 2 of adenine 2503 in 23S rRNA and position 2 of adenine 37 in tRNAs. The sequence is that of Probable dual-specificity RNA methyltransferase RlmN from Chlorobaculum tepidum (strain ATCC 49652 / DSM 12025 / NBRC 103806 / TLS) (Chlorobium tepidum).